A 420-amino-acid polypeptide reads, in one-letter code: LanC-like protein 3 (420 aa).

Belongs to the LanC-like protein family.

The chain is LanC-like protein 3 (LANCL3) from Homo sapiens (Human).